Consider the following 155-residue polypeptide: Small ribosomal subunit protein uS7cz/uS7cy (155 aa).

It belongs to the universal ribosomal protein uS7 family. As to quaternary structure, part of the 30S ribosomal subunit.

The protein resides in the plastid. Its subcellular location is the chloroplast. Functionally, one of the primary rRNA binding proteins, it binds directly to 16S rRNA where it nucleates assembly of the head domain of the 30S subunit. In Drimys granadensis, this protein is Small ribosomal subunit protein uS7cz/uS7cy (rps7-A).